Here is a 243-residue protein sequence, read N- to C-terminus: Probable fructoselysine utilization operon transcriptional repressor (243 aa).

Residues 10 to 78 (QLLYATVRQR…QGKGTFVQSQ (69 aa)) form the HTH gntR-type domain. A DNA-binding region (H-T-H motif) is located at residues 38–57 (ENELCTQYNVSRITIRKAIS).

It participates in carbohydrate metabolism; fructoselysine degradation [regulation]. Functionally, may regulate the transcription of the frlABCDR operon, involved in the utilization of fructoselysine and psicoselysine. This is Probable fructoselysine utilization operon transcriptional repressor (frlR) from Escherichia coli O157:H7.